Reading from the N-terminus, the 126-residue chain is Aspartate 1-decarboxylase (126 aa).

S25 functions as the Schiff-base intermediate with substrate; via pyruvic acid in the catalytic mechanism. S25 carries the pyruvic acid (Ser) modification. T57 provides a ligand contact to substrate. The active-site Proton donor is Y58. Residue 73–75 (GAA) participates in substrate binding.

The protein belongs to the PanD family. As to quaternary structure, heterooctamer of four alpha and four beta subunits. Pyruvate is required as a cofactor. Is synthesized initially as an inactive proenzyme, which is activated by self-cleavage at a specific serine bond to produce a beta-subunit with a hydroxyl group at its C-terminus and an alpha-subunit with a pyruvoyl group at its N-terminus.

It localises to the cytoplasm. It carries out the reaction L-aspartate + H(+) = beta-alanine + CO2. Its pathway is cofactor biosynthesis; (R)-pantothenate biosynthesis; beta-alanine from L-aspartate: step 1/1. In terms of biological role, catalyzes the pyruvoyl-dependent decarboxylation of aspartate to produce beta-alanine. This is Aspartate 1-decarboxylase from Citrobacter koseri (strain ATCC BAA-895 / CDC 4225-83 / SGSC4696).